The sequence spans 345 residues: Biotin synthase (345 aa).

A Radical SAM core domain is found at 66–293 (NTVQLSTLLS…RAMVRLSAGR (228 aa)). 3 residues coordinate [4Fe-4S] cluster: Cys81, Cys85, and Cys88. Positions 125, 156, 216, and 288 each coordinate [2Fe-2S] cluster.

The protein belongs to the radical SAM superfamily. Biotin synthase family. Homodimer. Requires [4Fe-4S] cluster as cofactor. [2Fe-2S] cluster serves as cofactor.

It carries out the reaction (4R,5S)-dethiobiotin + (sulfur carrier)-SH + 2 reduced [2Fe-2S]-[ferredoxin] + 2 S-adenosyl-L-methionine = (sulfur carrier)-H + biotin + 2 5'-deoxyadenosine + 2 L-methionine + 2 oxidized [2Fe-2S]-[ferredoxin]. It participates in cofactor biosynthesis; biotin biosynthesis; biotin from 7,8-diaminononanoate: step 2/2. In terms of biological role, catalyzes the conversion of dethiobiotin (DTB) to biotin by the insertion of a sulfur atom into dethiobiotin via a radical-based mechanism. This is Biotin synthase from Cupriavidus metallidurans (strain ATCC 43123 / DSM 2839 / NBRC 102507 / CH34) (Ralstonia metallidurans).